We begin with the raw amino-acid sequence, 192 residues long: Pyridoxal 5'-phosphate synthase subunit PdxT (192 aa).

46–48 (GES) serves as a coordination point for L-glutamine. The active-site Nucleophile is Cys-77. L-glutamine-binding positions include Arg-103 and 131 to 132 (IR). Active-site charge relay system residues include His-167 and Glu-169.

Belongs to the glutaminase PdxT/SNO family. In terms of assembly, in the presence of PdxS, forms a dodecamer of heterodimers. Only shows activity in the heterodimer.

It carries out the reaction aldehydo-D-ribose 5-phosphate + D-glyceraldehyde 3-phosphate + L-glutamine = pyridoxal 5'-phosphate + L-glutamate + phosphate + 3 H2O + H(+). It catalyses the reaction L-glutamine + H2O = L-glutamate + NH4(+). It participates in cofactor biosynthesis; pyridoxal 5'-phosphate biosynthesis. In terms of biological role, catalyzes the hydrolysis of glutamine to glutamate and ammonia as part of the biosynthesis of pyridoxal 5'-phosphate. The resulting ammonia molecule is channeled to the active site of PdxS. The chain is Pyridoxal 5'-phosphate synthase subunit PdxT from Exiguobacterium sibiricum (strain DSM 17290 / CCUG 55495 / CIP 109462 / JCM 13490 / 255-15).